The primary structure comprises 93 residues: MTQLLTKTEIQEQAKVLSGWTVEESKLHITRTFKDFIQAIEFVNKLVEPAESAGHHPDIKISYNKVKITLTTHDAGGLTQADFDVAQTISQIK.

It belongs to the pterin-4-alpha-carbinolamine dehydratase family.

It catalyses the reaction (4aS,6R)-4a-hydroxy-L-erythro-5,6,7,8-tetrahydrobiopterin = (6R)-L-erythro-6,7-dihydrobiopterin + H2O. This is Putative pterin-4-alpha-carbinolamine dehydratase from Nostoc punctiforme (strain ATCC 29133 / PCC 73102).